Consider the following 317-residue polypeptide: tRNA-dihydrouridine(20a/20b) synthase [NAD(P)+]-like (317 aa).

FMN contacts are provided by residues 33-35 and Gln87; that span reads PMV. Cys116 acts as the Proton donor in catalysis. FMN is bound by residues Lys158, His186, 216–218, and 240–241; these read NGD and AR.

This sequence belongs to the Dus family. Dus4 subfamily. The cofactor is FMN.

The catalysed reaction is 5,6-dihydrouridine(20a) in tRNA + NADP(+) = uridine(20a) in tRNA + NADPH + H(+). It catalyses the reaction 5,6-dihydrouridine(20a) in tRNA + NAD(+) = uridine(20a) in tRNA + NADH + H(+). It carries out the reaction 5,6-dihydrouridine(20b) in tRNA + NAD(+) = uridine(20b) in tRNA + NADH + H(+). The enzyme catalyses 5,6-dihydrouridine(20b) in tRNA + NADP(+) = uridine(20b) in tRNA + NADPH + H(+). Its function is as follows. Catalyzes the synthesis of dihydrouridine, a modified base found in the D-loop of most tRNAs. This is tRNA-dihydrouridine(20a/20b) synthase [NAD(P)+]-like (DUS4L) from Homo sapiens (Human).